We begin with the raw amino-acid sequence, 335 residues long: Peroxidase 2 (335 aa).

An N-terminal signal peptide occupies residues Met-1–Ala-29. Disulfide bonds link Cys-44–Cys-125, Cys-77–Cys-82, Cys-131–Cys-329, and Cys-212–Cys-238. His-75 functions as the Proton acceptor in the catalytic mechanism. 5 residues coordinate Ca(2+): Asp-76, Val-79, Gly-81, Asp-83, and Ser-85. Asn-166 and Asn-180 each carry an N-linked (GlcNAc...) asparagine glycan. His-205 provides a ligand contact to heme b. Position 206 (Thr-206) interacts with Ca(2+). An N-linked (GlcNAc...) asparagine glycan is attached at Asn-241. Residues Asp-253, Thr-256, and Asp-261 each contribute to the Ca(2+) site.

The protein belongs to the peroxidase family. Classical plant (class III) peroxidase subfamily. The cofactor is heme b. Requires Ca(2+) as cofactor. Expressed in the elongating region of young roots, and in root vascular tissues and epidermis.

It is found in the secreted. The catalysed reaction is 2 a phenolic donor + H2O2 = 2 a phenolic radical donor + 2 H2O. Its function is as follows. Removal of H(2)O(2), oxidation of toxic reductants, biosynthesis and degradation of lignin, suberization, auxin catabolism, response to environmental stresses such as wounding, pathogen attack and oxidative stress. These functions might be dependent on each isozyme/isoform in each plant tissue. This is Peroxidase 2 (PER2) from Zea mays (Maize).